The primary structure comprises 69 residues: Large ribosomal subunit protein uL29 (69 aa).

Belongs to the universal ribosomal protein uL29 family.

This Sulfolobus acidocaldarius (strain ATCC 33909 / DSM 639 / JCM 8929 / NBRC 15157 / NCIMB 11770) protein is Large ribosomal subunit protein uL29.